We begin with the raw amino-acid sequence, 332 residues long: tRNA-dihydrouridine(20/20a) synthase (332 aa).

FMN is bound by residues 20–22 and glutamine 73; that span reads PMM. The active-site Proton donor is cysteine 103. Residues lysine 142, histidine 174, 214–216, and 236–237 contribute to the FMN site; these read NGG and GR.

Belongs to the Dus family. DusA subfamily. The cofactor is FMN.

It catalyses the reaction 5,6-dihydrouridine(20) in tRNA + NADP(+) = uridine(20) in tRNA + NADPH + H(+). The enzyme catalyses 5,6-dihydrouridine(20) in tRNA + NAD(+) = uridine(20) in tRNA + NADH + H(+). The catalysed reaction is 5,6-dihydrouridine(20a) in tRNA + NADP(+) = uridine(20a) in tRNA + NADPH + H(+). It carries out the reaction 5,6-dihydrouridine(20a) in tRNA + NAD(+) = uridine(20a) in tRNA + NADH + H(+). Its function is as follows. Catalyzes the synthesis of 5,6-dihydrouridine (D), a modified base found in the D-loop of most tRNAs, via the reduction of the C5-C6 double bond in target uridines. Specifically modifies U20 and U20a in tRNAs. This chain is tRNA-dihydrouridine(20/20a) synthase, found in Pseudomonas aeruginosa (strain ATCC 15692 / DSM 22644 / CIP 104116 / JCM 14847 / LMG 12228 / 1C / PRS 101 / PAO1).